The primary structure comprises 1215 residues: MAVSLNDFISVKLKRYSRESPWERLRVPYRNKKQKKWASVHNNEAQLHSANKRNDNCLIQRSSTWRLGDMITLVIKDIPVTWLSNEGGKLYNLWEPLHDYGTIEFMKINEPLNGQTSTTAIVQFAPPPKVPFWEPNGKINVKGVDLAVQIDITAHRSHISRQVFSKNSFRSDQLVKIPLSSFKLGQVYDERIVPLFGVDCGITVTESNLLVYFNFKKLCVLFDASFDKQIETFRLDFDFHSIIGDVGTDYYDDHISLVFRFRFSPLIFRKSKNATESRVQTFWTASHLWRRHYDILPFNVSPTTASPIELLNCHNAPIGRCNVLVLSFSIRDESDKDDIAFLLHNLEKFNLKSQLDKVVFHLVPDYKHRCSLINDKEIEEEIAYLLQACLSKNLLSEIDLPIILANLKKLSKERAKKFLRLILTSKTALINPSELDFTKSFVFYDLSSASSIHIKKLYVTPTTLRIVEDSLEAGNRVIRNFKDFANRFMRVQITDEYYKQKIRGGSDGFRNEKLYSRIQQLLTYGIKVGNQIYEFLAFGNSQLREHGAYFFASGSDLNAKQIREWMGDFSEINSVSKYAARMGQCFSTTKEINRFCVDISLQDDIVRNNHCFTDGVGMASLSVIRRLSLEVKNHDMFPSAFQFRMGGYKGVLSLAPPTKLEYHQGNLVFPRRSQDKFKSFHSTLEVIKISRFSNAHLNMQLITLLEGLGVEKTVFLELTRSQLSKMNESINSKQKSILMLRDNVDEYHSTLIIADFIQAGFLERDDAFTENLLNLYYEWVLRLIKEKQKVSVPKGAYLLGVADETGTLKGHYDDAVLSVPEIFIQITDTSTSFGSYSTGKLKTRVIVGLCIVARNPSLHPGDVRVCKAVRCDELMHLKNVIVFPTTGDRSIPAMCSGGDLDGDEYTVIWDQRLLPKIVNYPPLLESSPKKSIDFLEGKPLIDSVKEFFVNYIKYDSLGLISNAWKAWAHDHDNNPEGIFGNVCLELAEMHSKAVDFAKSGVACKMQAKYHPKRYPDFMQKTKTRSFRSETAVGKIFRYAARFQRESGRPATYNPIMNTVYDPCMKLPRFKTEYLNVAEEVKKHYDNDLRSIMARFDISTEYEVYTAFILFKDDLAKTVNEYGLREEVSFQFDLLKKKYTQEYLEKCALSNQSAFDSSEYEERINSAVAATYDVTYDQRVKSVGNGTTEVLISFPYLFSSRLCQLSRKAMLTANNF.

This sequence belongs to the RdRP family. Cid12, hrr1 and rdp1 interact forming the RNA-directed RNA polymerase complex (RDRC). The RDRC complex interacts with the RITS complex via interaction between ago1 and hrr1. Clr4 has a role in mediating this interaction.

It localises to the cytoplasm. The protein localises to the nucleus. Its subcellular location is the chromosome. The protein resides in the telomere. It is found in the centromere. The catalysed reaction is RNA(n) + a ribonucleoside 5'-triphosphate = RNA(n+1) + diphosphate. Functionally, has a role in the RNA interference (RNAi) pathway which is important for heterochromatin formation, accurate chromosome segregation, centromere cohesion and telomere function during mitosis and meiosis. Required for both post-transcriptional and transcriptional gene silencing. Required for silencing at the centromeres and for initiation of transcriptionally silent heterochromatin at the mating type locus. Promotes histone H3 'Lys-10' methylation necessary for centromere function. Required for recruitment of swi6 and cohesin to an ectopic dg repeat. A member of the RNA-directed RNA polymerase complex (RDRC) which is involved in the generation of small interfering RNAs (siRNAs) and mediates their association with the RNA-induced transcriptional silencing (RITS) complex. RITS acts as a priming complex for dsRNA synthesis at the site of non-coding centromeric RNA. Its RNA-dependent RNA polymerase activity is critical in siRNA production necessary for heterochromatin formation. This Schizosaccharomyces pombe (strain 972 / ATCC 24843) (Fission yeast) protein is RNA-dependent RNA polymerase 1 (rdp1).